The sequence spans 101 residues: Small ribosomal subunit protein bS18c (101 aa).

The protein belongs to the bacterial ribosomal protein bS18 family. Part of the 30S ribosomal subunit.

The protein resides in the plastid. The protein localises to the chloroplast. This is Small ribosomal subunit protein bS18c (rps18) from Arabidopsis thaliana (Mouse-ear cress).